A 285-amino-acid chain; its full sequence is Transcription factor MYB15 (285 aa).

2 consecutive HTH myb-type domains span residues 9–61 and 62–116; these read KMGL…MNYL and KPDI…KKRL. 2 DNA-binding regions (H-T-H motif) span residues 37–61 and 89–112; these read WRALPKQAGLLRCGKSCRLRWMNYL and WSAIAAKLPGRTDNEIKNVWHTHL. The tract at residues 115 to 172 is disordered; sequence RLEDYQPAKPKTSNKKKGTKPKSESVITSSNSTRSESELADSSNPSGESLFSTSPSTS. Residues 139–158 show a composition bias toward polar residues; it reads SVITSSNSTRSESELADSSN. Residues 159 to 172 are compositionally biased toward low complexity; the sequence is PSGESLFSTSPSTS.

Interacts with SCRM/ICE1. Expressed in roots, leaves, stems and flowers. Expressed in stomatal guard cells.

Its subcellular location is the nucleus. Functionally, transcription factor involved in cold-regulation of CBF genes and in the development of freezing tolerance. May be part of a complex network of transcription factors controlling the expression of CBF genes and other genes in response to cold stress. Binds to the MYB recognition sequences in the promoters of CBF1, CBF2 and CBF3 genes. Involved in drought and salt tolerance. May enhance expression levels of genes involved in abscisic acid (ABA) biosynthesis and signaling, as well as those encoding stress-protective proteins. The chain is Transcription factor MYB15 from Arabidopsis thaliana (Mouse-ear cress).